A 547-amino-acid polypeptide reads, in one-letter code: Chaperonin GroEL (547 aa).

ATP is bound by residues 30 to 33 (TLGP), lysine 51, 87 to 91 (DGTTT), glycine 415, 479 to 481 (NAA), and aspartate 495.

This sequence belongs to the chaperonin (HSP60) family. As to quaternary structure, forms a cylinder of 14 subunits composed of two heptameric rings stacked back-to-back. Interacts with the co-chaperonin GroES.

Its subcellular location is the cytoplasm. The catalysed reaction is ATP + H2O + a folded polypeptide = ADP + phosphate + an unfolded polypeptide.. Together with its co-chaperonin GroES, plays an essential role in assisting protein folding. The GroEL-GroES system forms a nano-cage that allows encapsulation of the non-native substrate proteins and provides a physical environment optimized to promote and accelerate protein folding. This Cupriavidus pinatubonensis (strain JMP 134 / LMG 1197) (Cupriavidus necator (strain JMP 134)) protein is Chaperonin GroEL.